A 99-amino-acid polypeptide reads, in one-letter code: Ferredoxin, vegetative (99 aa).

In terms of domain architecture, 2Fe-2S ferredoxin-type spans 4 to 96 (YQVRLINKKR…DCTIRTHQEP (93 aa)). [2Fe-2S] cluster is bound by residues cysteine 42, cysteine 47, cysteine 50, and cysteine 80.

It belongs to the 2Fe2S plant-type ferredoxin family. It depends on [2Fe-2S] cluster as a cofactor.

Ferredoxins are iron-sulfur proteins that transfer electrons in a wide variety of metabolic reactions. Donates electrons to the nitrogenase 2. This chain is Ferredoxin, vegetative (fdxH2), found in Trichormus variabilis (strain ATCC 29413 / PCC 7937) (Anabaena variabilis).